Consider the following 362-residue polypeptide: MFDGARLAQGLPYYISQVVFYPFEIYNSMSIVDVISRQDELDSPKAKPHVNATVFDSWWFDAVSNNLTKESITVVFYNAGPESIGAPDLGGPLFVEISGTFDNGTKFTIGSTAPEGAVIESGTQGIRGDWMGSGCSFTGSDLHRPSPEYTVSIDNAGLGVFGKLTLQSVSPPHFAGGSNKPGVSPELIPNIYAAFAQPDAAAVVDFTINGKTLKFNGVGHHEKNWGTAALEASVKAWYWGHGRVGPYSLVWFDGVTPGGKEYFASLITENGKIVSQSCEPNSVVVRPWGENDEFPPVRGAAAPAGYTLRYALGHGMAFVANFTREVSQVEADTYKRMIGSFSGGMEGGEQYEGRALCDQFQF.

His-220 is a catalytic residue. The active-site Broensted acid is Glu-222.

Belongs to the quinolone epoxide rearrangement protein penF family.

It carries out the reaction [(1'E)-5'-(3',3'-dimethyloxiran-2'-yl)-3'-hydroxy-3'-methylpent-1'-en-1'-yl]-quinolinone B = yaequinolone D. It functions in the pathway secondary metabolite biosynthesis. The protein operates within alkaloid biosynthesis. It participates in mycotoxin biosynthesis. Its function is as follows. Quinolone epoxide rearrangement protein; part of the gene cluster that mediates the biosynthesis of penigequinolones, potent insecticidal alkaloids that contain a highly modified 10-carbon prenyl group. The first stage is catalyzed by the nonribosomal peptide synthetase penN that condenses anthranilic acid and O-methyl-L-tyrosine to produce 4'-methoxycyclopeptin. 4'-methoxycyclopeptin is then converted to 4'-methoxydehydrocyclopeptin by the ketoglutarate-dependent dioxygenase penM through dehydrogenation to form a double bond between C-alpha and C-beta of the O-methyltyrosine side chain. PenM also converts its first product methoxydehydrocyclopeptin to 4'-methoxycyclopenin. The following conversion of 4'methoxycyclopenin into 4'-methoxyviridicatin is catalyzed by the cyclopenase penL. 4'-methoxyviridicatin is the precursor of quinolone natural products, and is further converted to quinolinone B. The prenyltransferase penI then catalyzes the canonical Friedel-Crafts alkylation of quinolinone B with dimethylallyl cation to yield dimethylallyl quinolone, which is subjected to FAD-dependent dehydrogenation by the FAD-linked oxidoreductase penH to yield conjugated aryl diene. The delta(3') double bond then serves as the site of the second alkylation with DMAPP catalyzed by the prenyltransferase penG to yield a carbenium ion intermediate, which can be attacked by H(2)O to yield a styrenyl quinolone containing a C3'-hydroxyprenyl chain, or undergo cyclization to yield yaequinolones J1 and J2. The conversion of the styrenyl quinolone into the tetrahydrofuran-containing yaequinolone C is performed by the FAD-dependent monooxygenase penE and involves epoxidation of the terminal C7'-C8' olefin, followed by epoxide ring opening initiated by the C3' hydroxyl group. The predicted cysteine hydrolase penJ acts as an epoxide hydrolase that enhances the rate of the 5-exo-tet cyclization step, increasing the yield of yaequinolone C. PenF catalyzes the cationic rearrangement of the epoxide formed by penE (before ring opening to produce yaequinolone C) into yaequinolone D. Finally, the short-chain dehydrogenase/reductase (SDR)-like reductase penD, catalyzes both the dehydration of yaequinolone D and the reduction of the resulting oxonium to yield penigequinolone. This Penicillium thymicola protein is Quinolone epoxide rearrangement protein penF.